The sequence spans 303 residues: Methionyl-tRNA formyltransferase (303 aa).

111 to 114 contributes to the (6S)-5,6,7,8-tetrahydrofolate binding site; it reads SLLP.

Belongs to the Fmt family.

It carries out the reaction L-methionyl-tRNA(fMet) + (6R)-10-formyltetrahydrofolate = N-formyl-L-methionyl-tRNA(fMet) + (6S)-5,6,7,8-tetrahydrofolate + H(+). Its function is as follows. Attaches a formyl group to the free amino group of methionyl-tRNA(fMet). The formyl group appears to play a dual role in the initiator identity of N-formylmethionyl-tRNA by promoting its recognition by IF2 and preventing the misappropriation of this tRNA by the elongation apparatus. The protein is Methionyl-tRNA formyltransferase of Ehrlichia canis (strain Jake).